Here is a 189-residue protein sequence, read N- to C-terminus: T-cell surface glycoprotein CD3 epsilon chain (189 aa).

Positions 1 to 21 (MRWNTFWGILCLSLLAVGTCQ) are cleaved as a signal peptide. One can recognise an Ig-like domain in the interval 23 to 99 (DAENIEYKVS…KNTYLYLKAR (77 aa)). Residues 23–108 (DAENIEYKVS…RVCEYCVEVD (86 aa)) lie on the Extracellular side of the membrane. Cys-42 and Cys-83 form a disulfide bridge. A helical membrane pass occupies residues 109–134 (LTAVAIIIIVDICITLGLLMVIYYWS). Topologically, residues 135–189 (KNRKAKAKPVTRGTGAGSRPRGQNKERPPPVPNPDYEPIRKGQRDLYSGLNQRAV) are cytoplasmic. The tract at residues 143-189 (PVTRGTGAGSRPRGQNKERPPPVPNPDYEPIRKGQRDLYSGLNQRAV) is disordered. Positions 157–174 (QNKERPPPVPNPDYEPIR) are NUMB-binding region. In terms of domain architecture, ITAM spans 160–187 (ERPPPVPNPDYEPIRKGQRDLYSGLNQR). The interval 161–168 (RPPPVPNP) is proline-rich sequence. 2 positions are modified to phosphotyrosine: Tyr-170 and Tyr-181.

In terms of assembly, the TCR-CD3 complex is composed of a CD3D/CD3E and a CD3G/CD3E heterodimers that preferentially associate with TCRalpha and TCRbeta, respectively, to form TCRalpha/CD3E/CD3G and TCRbeta/CD3G/CD3E trimers. In turn, the hexamer interacts with CD3Z homodimer to form the TCR-CD3 complex. Alternatively, TCRalpha and TCRbeta can be replaced by TCRgamma and TCRdelta. Interacts with CD6. Interacts (via Proline-rich sequence) with NCK1; the interaction is ligand dependent but independent of tyrosine kinase activation. In terms of processing, phosphorylated on Tyr residues after T-cell receptor triggering by LCK in association with CD4/CD8.

The protein resides in the cell membrane. Part of the TCR-CD3 complex present on T-lymphocyte cell surface that plays an essential role in adaptive immune response. When antigen presenting cells (APCs) activate T-cell receptor (TCR), TCR-mediated signals are transmitted across the cell membrane by the CD3 chains CD3D, CD3E, CD3G and CD3Z. All CD3 chains contain immunoreceptor tyrosine-based activation motifs (ITAMs) in their cytoplasmic domain. Upon TCR engagement, these motifs become phosphorylated by Src family protein tyrosine kinases LCK and FYN, resulting in the activation of downstream signaling pathways. In addition of this role of signal transduction in T-cell activation, CD3E plays an essential role in correct T-cell development. Also participates in internalization and cell surface down-regulation of TCR-CD3 complexes via endocytosis sequences present in CD3E cytosolic region. In addition to its role as a TCR coreceptor, it serves as a receptor for ITPRIPL1. Ligand recognition inhibits T-cell activation by promoting interaction with NCK1, which prevents CD3E-ZAP70 interaction and blocks the ERK-NFkB signaling cascade and calcium influx. In Mus musculus (Mouse), this protein is T-cell surface glycoprotein CD3 epsilon chain (Cd3e).